The primary structure comprises 185 residues: Probable nicotinate-nucleotide adenylyltransferase (185 aa).

It belongs to the NadD family.

It carries out the reaction nicotinate beta-D-ribonucleotide + ATP + H(+) = deamido-NAD(+) + diphosphate. It functions in the pathway cofactor biosynthesis; NAD(+) biosynthesis; deamido-NAD(+) from nicotinate D-ribonucleotide: step 1/1. Functionally, catalyzes the reversible adenylation of nicotinate mononucleotide (NaMN) to nicotinic acid adenine dinucleotide (NaAD). The sequence is that of Probable nicotinate-nucleotide adenylyltransferase from Methylorubrum extorquens (strain PA1) (Methylobacterium extorquens).